A 239-amino-acid polypeptide reads, in one-letter code: Ribonuclease PH (239 aa).

Residues R86 and 124-126 (GTR) each bind phosphate.

It belongs to the RNase PH family. As to quaternary structure, homohexameric ring arranged as a trimer of dimers.

It carries out the reaction tRNA(n+1) + phosphate = tRNA(n) + a ribonucleoside 5'-diphosphate. Phosphorolytic 3'-5' exoribonuclease that plays an important role in tRNA 3'-end maturation. Removes nucleotide residues following the 3'-CCA terminus of tRNAs; can also add nucleotides to the ends of RNA molecules by using nucleoside diphosphates as substrates, but this may not be physiologically important. Probably plays a role in initiation of 16S rRNA degradation (leading to ribosome degradation) during starvation. This is Ribonuclease PH from Rhodopseudomonas palustris (strain BisB18).